The chain runs to 467 residues: MNDVDIKTREYTTVSEVAGPLMVVQGVEGAAYNEIVEIETPAGENRTGQVLEVKEDIAVVQVFEGTSDLNTESTKVRFTGETAKIGLSTDMLGRIFNGIGKPIDGGPDIIPDQELDVNGSPMNPSAREFPAEFIQTGISTIDGMNTLVRGQKLPIFSGSGLPHNELAAQIARQAKVIAEDSEFAVIFGAMGITHEEANFFMNEFEQTGALERVTVFMNLADDPAIERIMTPKMALTTAEYLAFEKGMHVLVILTDITNYCEALREISSARNEVPGRRGYPGYMYTDLAGMYERAGRINGKEGSITQMPILVMPQDDITHPIPDLTGYITEGQVVLSRELDRTGIYPPVDVLPSLSRLMSGGIGEGRTREDHSGVSDQLYAAYAEGRDLRDLTAVVGEEALTDRDRKFLKFADEFEDKFIRQSKDEDRSIQETLDLGWKLLSILPKTELKRVKDQYVEQYLPQSETEE.

The protein belongs to the ATPase alpha/beta chains family. Has multiple subunits with at least A(3), B(3), C, D, E, F, H, I and proteolipid K(x).

The protein localises to the cell membrane. In terms of biological role, component of the A-type ATP synthase that produces ATP from ADP in the presence of a proton gradient across the membrane. The B chain is a regulatory subunit. The chain is A-type ATP synthase subunit B from Methanosphaera stadtmanae (strain ATCC 43021 / DSM 3091 / JCM 11832 / MCB-3).